Here is a 340-residue protein sequence, read N- to C-terminus: Guanine nucleotide-binding protein G(I)/G(S)/G(T) subunit beta-1 (340 aa).

7 WD repeats span residues 53–83 (GHLA…IIWD), 95–125 (LRSS…PIYN), 141–170 (GHTG…ALWD), 182–212 (GHTG…KLWD), 224–254 (GHES…RLFD), 268–298 (NIIC…NVWD), and 310–340 (GHDN…KIWN).

The protein belongs to the WD repeat G protein beta family. In terms of assembly, g proteins are composed of 3 units, alpha, beta and gamma.

Its function is as follows. Guanine nucleotide-binding proteins (G proteins) are involved as a modulator or transducer in various transmembrane signaling systems. The beta and gamma chains are required for the GTPase activity, for replacement of GDP by GTP, and for G protein-effector interaction. This Xenopus laevis (African clawed frog) protein is Guanine nucleotide-binding protein G(I)/G(S)/G(T) subunit beta-1 (gnb1).